The sequence spans 256 residues: 1-(5-phosphoribosyl)-5-[(5-phosphoribosylamino)methylideneamino] imidazole-4-carboxamide isomerase (256 aa).

Catalysis depends on aspartate 8, which acts as the Proton acceptor. Aspartate 129 functions as the Proton donor in the catalytic mechanism.

Belongs to the HisA/HisF family.

The protein localises to the cytoplasm. It catalyses the reaction 1-(5-phospho-beta-D-ribosyl)-5-[(5-phospho-beta-D-ribosylamino)methylideneamino]imidazole-4-carboxamide = 5-[(5-phospho-1-deoxy-D-ribulos-1-ylimino)methylamino]-1-(5-phospho-beta-D-ribosyl)imidazole-4-carboxamide. The protein operates within amino-acid biosynthesis; L-histidine biosynthesis; L-histidine from 5-phospho-alpha-D-ribose 1-diphosphate: step 4/9. This Synechococcus elongatus (strain ATCC 33912 / PCC 7942 / FACHB-805) (Anacystis nidulans R2) protein is 1-(5-phosphoribosyl)-5-[(5-phosphoribosylamino)methylideneamino] imidazole-4-carboxamide isomerase.